A 201-amino-acid chain; its full sequence is Small ribosomal subunit protein uS4c (201 aa).

Residues 15–43 (LGALPGLTSKRPTPGSDLRNQSRSGKRSQ) form a disordered region. The S4 RNA-binding domain maps to 89-149 (MRLDNILFRL…DEQKSRALIQ (61 aa)).

The protein belongs to the universal ribosomal protein uS4 family. Part of the 30S ribosomal subunit. Contacts protein S5. The interaction surface between S4 and S5 is involved in control of translational fidelity.

The protein localises to the plastid. The protein resides in the chloroplast. Its function is as follows. One of the primary rRNA binding proteins, it binds directly to 16S rRNA where it nucleates assembly of the body of the 30S subunit. With S5 and S12 plays an important role in translational accuracy. The protein is Small ribosomal subunit protein uS4c (rps4) of Nandina domestica (Heavenly bamboo).